Reading from the N-terminus, the 308-residue chain is Ceramide synthase 1 LOH3 (308 aa).

Helical transmembrane passes span 25-45 (VLPL…RFVF), 82-102 (CVYY…EPWF), 128-148 (LLYM…VFWE), 154-174 (FGVS…SYVC), 213-233 (FILF…FWIL), and 258-278 (YMFN…WVLM). Positions 73–287 (RKFKESAWKC…MYRMLVKQIQ (215 aa)) constitute a TLC domain. Ser298 and Ser300 each carry phosphoserine.

As to expression, expressed ubiquitously at low levels. Not observed in pollen.

The protein resides in the endoplasmic reticulum membrane. It catalyses the reaction (4R)-hydroxysphinganine + a fatty acyl-CoA = an N-acyl-(4R)-4-hydroxysphinganine + CoA + H(+). The catalysed reaction is a sphingoid base + tetracosanoyl-CoA = an N-tetracosanoyl-sphingoid base + CoA + H(+). It carries out the reaction (4R)-hydroxysphinganine + hexadecanoyl-CoA = N-hexadecanoyl-(4R)-hydroxysphinganine + CoA + H(+). The enzyme catalyses (4R)-hydroxysphinganine + octadecanoyl-CoA = N-octadecanoyl-(4R)-hydroxysphinganine + CoA + H(+). It catalyses the reaction (4R)-hydroxysphinganine + eicosanoyl-CoA = N-eicosanoyl-(4R)-hydroxysphinganine + CoA + H(+). The catalysed reaction is docosanoyl-CoA + (4R)-hydroxysphinganine = N-docosanoyl-(4R)-hydroxysphinganine + CoA + H(+). It carries out the reaction hexacosanoyl-CoA + (4R)-hydroxysphinganine = N-hexacosanoyl-(4R)-hydroxysphinganine + CoA + H(+). The enzyme catalyses tetracosanoyl-CoA + (4R)-hydroxysphinganine = N-tetracosanoyl-(4R)-hydroxysphinganine + CoA + H(+). It catalyses the reaction tetracosanoyl-CoA + sphing-4-enine = N-tetracosanoyl-sphing-4-enine + CoA + H(+). The catalysed reaction is sphinga-(4E,8Z)-dienine + tetracosanoyl-CoA = N-tetracosanoylsphinga-(4E,8Z)-dienine + CoA + H(+). It carries out the reaction sphinga-(4E,8E)-dienine + tetracosanoyl-CoA = N-tetracosanoylsphinga-(4E,8E)-dienine + CoA + H(+). The enzyme catalyses (4R)-hydroxysphing-(8Z)-enine + tetracosanoyl-CoA = N-tetracosanoyl-(4R)-hydroxysphing-(8Z)-enine + CoA + H(+). It catalyses the reaction (4R)-hydroxysphing-(8E)-enine + tetracosanoyl-CoA = N-tetracosanoyl-(4R)-hydroxysphing-(8E)-enine + CoA + H(+). It functions in the pathway sphingolipid metabolism. With respect to regulation, inhibited by the mycotoxin fumonisin B(1), a sphingosine analog mycotoxins produced by pathogenic fungi. Repressed by divalent cation such as magnesium Mg(2+), copper Cu(2+), zinc Zn(2+), manganese Mn(2+), calcium Ca(2+) and cobalt Co(2+). In terms of biological role, essential for plant growth, promotes cell division in root meristems. Catalyzes the biosynthesis of ceramide sphingolipids with C(16) to C(28) fatty acids, structural membrane lipids involved in membrane trafficking (e.g. early endosomes) and cell polarity (e.g. polar auxin transport related proteins); active on a broad substrate spectrum, both regarding chain lengths of fatty acids and the sphingoid base, such as long-chain base (LCB) phytosphingosine (t18:0). Mediates resistance to sphinganine-analog mycotoxins (SAMs, e.g. fumonisin B(1)) by restoring the sphingolipid biosynthesis. Could salvage the transport of GPI-anchored proteins from the endoplasmic reticulum to the Golgi apparatus in ceramides-depleted cells after SAM exposure. Contributes to hypoxic conditions tolerance (e.g. submergences), especially in the dark, by promoting the formation of very-long-chain (VLC) ceramide species (22:1, 24:1 and 26:1) and of VLC unsaturated ceramides, which are modulating CTR1-mediated ethylene signaling leading to endoplasmic reticulum (ER)-to-nucleus translocation of EIN2 and EIN3. The chain is Ceramide synthase 1 LOH3 from Arabidopsis thaliana (Mouse-ear cress).